The chain runs to 307 residues: Major immediate early protein (307 aa).

An RING-type zinc finger spans residues 39 to 92 (CAVCLETYCVQSNNIIDFLMPSECTHLFCYKCVLNMYKNAMNVPRAAVSCPMCN).

This Orgyia pseudotsugata multicapsid polyhedrosis virus (OpMNPV) protein is Major immediate early protein (PE38).